Reading from the N-terminus, the 185-residue chain is Adenine phosphoribosyltransferase (185 aa).

Belongs to the purine/pyrimidine phosphoribosyltransferase family. Homodimer.

It is found in the cytoplasm. The catalysed reaction is AMP + diphosphate = 5-phospho-alpha-D-ribose 1-diphosphate + adenine. It functions in the pathway purine metabolism; AMP biosynthesis via salvage pathway; AMP from adenine: step 1/1. Its function is as follows. Catalyzes a salvage reaction resulting in the formation of AMP, that is energically less costly than de novo synthesis. The polypeptide is Adenine phosphoribosyltransferase (Kineococcus radiotolerans (strain ATCC BAA-149 / DSM 14245 / SRS30216)).